Reading from the N-terminus, the 292-residue chain is Ribosomal RNA small subunit methyltransferase A (292 aa).

The S-adenosyl-L-methionine site is built by N28, L30, G55, E76, D101, and N126.

The protein belongs to the class I-like SAM-binding methyltransferase superfamily. rRNA adenine N(6)-methyltransferase family. RsmA subfamily.

Its subcellular location is the cytoplasm. It catalyses the reaction adenosine(1518)/adenosine(1519) in 16S rRNA + 4 S-adenosyl-L-methionine = N(6)-dimethyladenosine(1518)/N(6)-dimethyladenosine(1519) in 16S rRNA + 4 S-adenosyl-L-homocysteine + 4 H(+). Specifically dimethylates two adjacent adenosines (A1518 and A1519) in the loop of a conserved hairpin near the 3'-end of 16S rRNA in the 30S particle. May play a critical role in biogenesis of 30S subunits. The protein is Ribosomal RNA small subunit methyltransferase A of Bacillus mycoides (strain KBAB4) (Bacillus weihenstephanensis).